An 883-amino-acid chain; its full sequence is MTSASSMSVSVECVNICNLTKGDGNARSDCSALSCAWKAPRALTGFLASTAHPPVCSVYSCGRNGRKSRMKACAWQRYEYEVGFSEAPYFVNVRNILKSRLSCGGHKRWELYCVSAESSSGASSDVTVETLWEDLFPSISYLPRKELEFVQKGLKLAFEAHHGQKRRSGEPFIIHPVAVARILGELELDWESIVAGLLHDTVEDTNFITFEKIEEEFGATVRHIVEGETKVSKLGKLKCKTESETIQDVKADDLRQMFLAMTDEVRVIIVKLADRLHNMRTLCHMPPHKQSSIAGETLQVFAPLAKLLGMYSIKSELENLSFMYVSAEDYDRVTSRIANLYKEHEKELTEANRILVKKIEDDQFLDLVTVNTDVRSVCKETYSIYKAALKSKGSINDYNQIAQLRIVVKPKPSVGVGPLCSPQQICYHVLGLVHEIWKPIPRTVKDYIATPKPNGYQSLHTTVIPFLYESMFRLEVQIRTEEMDLIAERGIAVYYNGKSLSTGLVGNAVPLGRNSRGKTGCLNNADFALRVGWLNAIREWQEEFVGNMSSREFVDTITRDLLGSRVFVFTPKGEIKNLPKGATVVDYAYLIHTEIGNKMVAAKVNGNLVSPTHVLENAEVVEIVTYNALSSKSAFQRHKQWLQHAKTRSARHKIMRFLREQAAQCAAEITQDQVNDFVADSDSDVEDLTEDSRKSLQWWEKILVNVKQFQSQDKSRDTTPAPQNGSVWAPKVNGKHNKAIKNSSSDEPEFLLPGDGIARILPANIPAYKEVLPGLDSWRDSKIATWHHLEGQSIEWLCVVSMDRKGIIAEVTTVLAAEGIALCSCVAEIDRGRGLAVMLFQIEANIESLVSVCAKVDLVLGVLGWSSGCSWPRSTENAQVLEC.

The transit peptide at Met-1–Val-55 directs the protein to the chloroplast. Residues Phe-172–Met-279 form the HD domain. The TGS domain occupies Leu-562–Thr-625. The segment covering Gln-710–Ser-726 has biased composition (polar residues). Positions Gln-710–Asp-746 are disordered. An ACT domain is found at Trp-796–Ser-867.

It belongs to the RelA/SpoT family. In terms of assembly, interacts with RPP5.

The protein localises to the plastid. Its subcellular location is the chloroplast. It carries out the reaction GTP + ATP = guanosine 3'-diphosphate 5'-triphosphate + AMP. Functionally, may be involved in a rapid plant ppGpp (guanosine 3'-diphosphate 5'-diphosphate)-mediated response to pathogens and other stresses. The chain is Putative GTP diphosphokinase RSH1, chloroplastic (RSH1) from Arabidopsis thaliana (Mouse-ear cress).